Consider the following 421-residue polypeptide: Core-capsid bridging protein (421 aa).

This sequence belongs to the adenoviridae core-capsid bridging protein family. Monomer. Homodimer. Exists in equilibrium between monomers and dimers in solution. Interacts with the histone-like nucleoprotein; this interactions bridge the virus core to the capsid. Interacts with core protein X; this interactions bridge the virus core to the capsid. Interacts with the endosome lysis protein VI; this interactions bridge the virus core to the capsid. Interacts with the peripentonal hexons. Interacts with host NPM1; this interaction might play a role in virus assembly.

It is found in the virion. The protein localises to the host nucleus. Its subcellular location is the host nucleolus. Its function is as follows. Associates loosely with the viral DNA to form an outer shell around the nucleoprotein-DNA complex and links it with the capsid by binding the endosome lysis protein. Dissociates from the viral genome during entry. Might be involved in nuclear capsid assembly of the viral particles through its association with NPM1/nucleophosmin. The protein is Core-capsid bridging protein of Canine adenovirus serotype 1 (strain RI261) (CAdV-1).